Consider the following 338-residue polypeptide: Toxin coregulated pilus biosynthesis protein F (338 aa).

The first 20 residues, 1–20 (MRYKKTLMLSIMITSFNSFA), serve as a signal peptide directing secretion.

Its subcellular location is the cell outer membrane. Functionally, involved in TCP pilus biogenesis. May be a channel protein. This is Toxin coregulated pilus biosynthesis protein F (tcpF) from Vibrio cholerae serotype O1 (strain ATCC 39541 / Classical Ogawa 395 / O395).